A 456-amino-acid polypeptide reads, in one-letter code: Peptide chain release factor PrfB1, chloroplastic (456 aa).

A chloroplast-targeting transit peptide spans 1 to 58 (MSMELTVLGPLAGRSFAIAGKPKLLLLRPTNLPLLRLSLPLSLPNFSSSSRFNSPIVF).

The protein belongs to the prokaryotic/mitochondrial release factor family. As to expression, expressed in leaves, stems and flowers.

Its subcellular location is the plastid. It is found in the chloroplast stroma. Directs the termination of translation in response to the peptide chain termination codon UGA. Required for the proper translation, stability and normal processing of UGA-containing polycistronic transcripts in chloroplasts. The protein is Peptide chain release factor PrfB1, chloroplastic of Arabidopsis thaliana (Mouse-ear cress).